The primary structure comprises 472 residues: 12S seed storage protein CRA1 (472 aa).

The signal sequence occupies residues 1 to 24; it reads MARVSSLLSFCLTLLILFHGYAAQ. 2 cysteine pairs are disulfide-bonded: Cys36–Cys69 and Cys112–Cys289. Positions 41 to 236 constitute a Cupin type-1 1 domain; that stretch reads LNALEPSHVL…ALKIDLQTAQ (196 aa). Thr115 carries the post-translational modification Phosphothreonine. Residues 259-283 form a disordered region; it reads RPPLRGQRPQEEEEEEGRHGRHGNG. The region spanning 295 to 444 is the Cupin type-1 2 domain; it reads DNLDDPSRAD…GFQISPEEAR (150 aa). At Tyr312 the chain carries Phosphotyrosine. Ser314 bears the Phosphoserine mark. Phosphothreonine is present on residues Thr408 and Thr433.

Belongs to the 11S seed storage protein (globulins) family. In terms of assembly, hexamer; each subunit is composed of an acidic and a basic chain derived from a single precursor and linked by a disulfide bond. In terms of processing, phosphorylated in seeds on some Tyr residues in response to abscisic acid (ABA). Post-translationally, proteolytically processed during seed maturation at a conserved Asn-Gly peptide bond by an asparaginyl endopeptidase to produce two mature polypeptides referred to as alpha and beta subunits that are joined together by a disulfide bond. In terms of tissue distribution, accumulates in seeds 8 days after anthesis.

The protein localises to the protein storage vacuole. Functionally, seed storage protein. The chain is 12S seed storage protein CRA1 (CRA1) from Arabidopsis thaliana (Mouse-ear cress).